Reading from the N-terminus, the 312-residue chain is NAD(P)(+)--arginine ADP-ribosyltransferase 2 (312 aa).

An N-terminal signal peptide occupies residues 1–20 (MELLALRWVLLAGTLLSTSA). A propeptide spanning residues 21–31 (ASSALQEGDLG) is cleaved from the precursor. Intrachain disulfides connect Cys51–Cys260 and Cys159–Cys208. In terms of domain architecture, TR mART core spans 71–256 (YAYAVGWRKA…IYLRSKGKMS (186 aa)). Residues Tyr108, Arg164, and Gln183 each contribute to the NAD(+) site. Arg164 is an active-site residue. Residue Ser186 is part of the active site. Ser217 is a binding site for NAD(+). Glu224 is an active-site residue. Residues 267-312 (GGQWGRGHQEVGLGLSPGLALPVLPCSNCSCWGSGHRAGDPIPAAV) constitute a propeptide that is removed on maturation.

The protein belongs to the Arg-specific ADP-ribosyltransferase family.

It localises to the secreted. Its subcellular location is the extracellular space. The catalysed reaction is L-arginyl-[protein] + NAD(+) = N(omega)-(ADP-D-ribosyl)-L-arginyl-[protein] + nicotinamide + H(+). In Gallus gallus (Chicken), this protein is NAD(P)(+)--arginine ADP-ribosyltransferase 2.